Here is a 521-residue protein sequence, read N- to C-terminus: MIKQALISVSDKTGIVDFAKSLSDLGVKLLSTGGTAKLLADAGLPVTEVADYTGFPEMLDGRVKTLHPKVHGGILARRDLPEHMQALEQHGIPTIDLLVVNLYPFVATIAKDDCTLADAIENIDIGGPTMLRSAAKNHRDVTVVVDPADYAVVLDEMKANGNTVGHPTNFRLATKVFAHTAQYDGAITNYLTSLTDELKHASRSTYPATLNLAFDKVQDLRYGENPHQSAAFYRDLATPAGALANYRQLQGKELSYNNIADSDAAWECVKTFDAPACVIIKHANPCGVAVGNDSADAYAKAFQTDPTSAFGGIIAFNREVDEAAAQAVAKQFVEVLIAPSFSDAAKQVFAAKQNVRLLEIALGDGHNAFDLKRVGGGLLVQSLDSRNVQPSELRVVTKRQPTAKEMDDLLFAWRVAKYVKSNAIVFCGNGMTLGVGAGQMSRVDSARIASIKAQNAGLTLAGSAVASDAFFPFRDGLDVVVAAGATCVIQPGGSMRDDEVIAAADEHGIAMVLTGVRHFRH.

Residues 1–145 (MIKQALISVS…KNHRDVTVVV (145 aa)) enclose the MGS-like domain.

Belongs to the PurH family.

It carries out the reaction (6R)-10-formyltetrahydrofolate + 5-amino-1-(5-phospho-beta-D-ribosyl)imidazole-4-carboxamide = 5-formamido-1-(5-phospho-D-ribosyl)imidazole-4-carboxamide + (6S)-5,6,7,8-tetrahydrofolate. It catalyses the reaction IMP + H2O = 5-formamido-1-(5-phospho-D-ribosyl)imidazole-4-carboxamide. It participates in purine metabolism; IMP biosynthesis via de novo pathway; 5-formamido-1-(5-phospho-D-ribosyl)imidazole-4-carboxamide from 5-amino-1-(5-phospho-D-ribosyl)imidazole-4-carboxamide (10-formyl THF route): step 1/1. It functions in the pathway purine metabolism; IMP biosynthesis via de novo pathway; IMP from 5-formamido-1-(5-phospho-D-ribosyl)imidazole-4-carboxamide: step 1/1. This chain is Bifunctional purine biosynthesis protein PurH, found in Burkholderia orbicola (strain AU 1054).